We begin with the raw amino-acid sequence, 201 residues long: Recombination protein RecR (201 aa).

The C4-type zinc-finger motif lies at 58–73; the sequence is CEQCASITDTCPCRIC. A Toprim domain is found at 81–178; the sequence is DKLCLVSEWD…ELSRLAQGIP (98 aa).

Belongs to the RecR family.

Its function is as follows. May play a role in DNA repair. It seems to be involved in an RecBC-independent recombinational process of DNA repair. It may act with RecF and RecO. This chain is Recombination protein RecR, found in Maridesulfovibrio salexigens (strain ATCC 14822 / DSM 2638 / NCIMB 8403 / VKM B-1763) (Desulfovibrio salexigens).